The sequence spans 333 residues: 1D-myo-inositol 2-acetamido-2-deoxy-alpha-D-glucopyranoside deacetylase (333 aa).

Zn(2+) contacts are provided by H18, D21, and H165.

Belongs to the MshB deacetylase family. Requires Zn(2+) as cofactor.

It catalyses the reaction 1D-myo-inositol 2-acetamido-2-deoxy-alpha-D-glucopyranoside + H2O = 1D-myo-inositol 2-amino-2-deoxy-alpha-D-glucopyranoside + acetate. Catalyzes the deacetylation of 1D-myo-inositol 2-acetamido-2-deoxy-alpha-D-glucopyranoside (GlcNAc-Ins) in the mycothiol biosynthesis pathway. The chain is 1D-myo-inositol 2-acetamido-2-deoxy-alpha-D-glucopyranoside deacetylase from Corynebacterium jeikeium (strain K411).